Here is a 465-residue protein sequence, read N- to C-terminus: tRNA modification GTPase MnmE (465 aa).

R24, E84, and K127 together coordinate (6S)-5-formyl-5,6,7,8-tetrahydrofolate. Residues 223 to 383 (GLNIVLAGQP…LRGELLRLIG (161 aa)) form the TrmE-type G domain. N233 lines the K(+) pocket. GTP is bound by residues 233–238 (NVGKSS), 252–258 (TAIAGTT), and 277–280 (DTAG). S237 is a Mg(2+) binding site. K(+) contacts are provided by T252, I254, and T257. Mg(2+) is bound at residue T258. K465 lines the (6S)-5-formyl-5,6,7,8-tetrahydrofolate pocket.

It belongs to the TRAFAC class TrmE-Era-EngA-EngB-Septin-like GTPase superfamily. TrmE GTPase family. As to quaternary structure, homodimer. Heterotetramer of two MnmE and two MnmG subunits. It depends on K(+) as a cofactor.

It localises to the cytoplasm. Functionally, exhibits a very high intrinsic GTPase hydrolysis rate. Involved in the addition of a carboxymethylaminomethyl (cmnm) group at the wobble position (U34) of certain tRNAs, forming tRNA-cmnm(5)s(2)U34. This is tRNA modification GTPase MnmE from Janthinobacterium sp. (strain Marseille) (Minibacterium massiliensis).